The chain runs to 401 residues: Tumor necrosis factor receptor superfamily member 11B (401 aa).

The signal sequence occupies residues 1–21 (MNKWLCCALLVLLDIIEWTTQ). TNFR-Cys repeat units follow at residues 24–62 (LPPK…KTLC), 65–105 (CPDH…NRVC), 107–142 (CEEG…NTVC), and 145–185 (CPDG…DNVC). 8 disulfide bridges follow: C41-C54, C44-C62, C65-C80, C83-C97, C87-C105, C107-C118, C124-C142, and C145-C160. A glycan (N-linked (GlcNAc...) asparagine) is linked at N98. N-linked (GlcNAc...) asparagine glycosylation is found at N165 and N178. C166 and C185 are joined by a disulfide. Death domains lie at 198–269 (DVTL…MVKK) and 283–365 (RHLG…THSL). N289 carries an N-linked (GlcNAc...) asparagine glycan.

In terms of assembly, homodimer. Interacts with TNFSF10 and TNFSF11. As to expression, highly expressed in liver, lung, stomach, intestines and calvaria. Highly expressed in decidua and placenta, and in embryo.

It is found in the secreted. Its function is as follows. Acts as a decoy receptor for TNFSF11/RANKL and thereby neutralizes its function in osteoclastogenesis. Inhibits the activation of osteoclasts and promotes osteoclast apoptosis in vitro. Bone homeostasis seems to depend on the local ratio between TNFSF11 and TNFRSF11B. May also play a role in preventing arterial calcification. May act as decoy receptor for TNFSF10/TRAIL and protect against apoptosis. TNFSF10/TRAIL binding blocks the inhibition of osteoclastogenesis. The chain is Tumor necrosis factor receptor superfamily member 11B (Tnfrsf11b) from Mus musculus (Mouse).